Reading from the N-terminus, the 842-residue chain is Protein translocase subunit SecA (842 aa).

Residues glutamine 85, 103–107 (GEGKT), and aspartate 493 each bind ATP. Residues cysteine 825, cysteine 827, cysteine 836, and histidine 837 each coordinate Zn(2+).

This sequence belongs to the SecA family. Monomer and homodimer. Part of the essential Sec protein translocation apparatus which comprises SecA, SecYEG and auxiliary proteins SecDF. Other proteins may also be involved. It depends on Zn(2+) as a cofactor.

Its subcellular location is the cell membrane. The protein localises to the cytoplasm. It catalyses the reaction ATP + H2O + cellular proteinSide 1 = ADP + phosphate + cellular proteinSide 2.. Its function is as follows. Part of the Sec protein translocase complex. Interacts with the SecYEG preprotein conducting channel. Has a central role in coupling the hydrolysis of ATP to the transfer of proteins into and across the cell membrane, serving as an ATP-driven molecular motor driving the stepwise translocation of polypeptide chains across the membrane. The sequence is that of Protein translocase subunit SecA from Streptococcus uberis (strain ATCC BAA-854 / 0140J).